We begin with the raw amino-acid sequence, 121 residues long: Mediator of RNA polymerase II transcription subunit 22 (121 aa).

Belongs to the Mediator complex subunit 22 family. As to quaternary structure, component of the Mediator complex.

It localises to the nucleus. In terms of biological role, component of the Mediator complex, a coactivator involved in the regulated transcription of nearly all RNA polymerase II-dependent genes. Mediator functions as a bridge to convey information from gene-specific regulatory proteins to the basal RNA polymerase II transcription machinery. Mediator is recruited to promoters by direct interactions with regulatory proteins and serves as a scaffold for the assembly of a functional preinitiation complex with RNA polymerase II and the general transcription factors. This Eremothecium gossypii (strain ATCC 10895 / CBS 109.51 / FGSC 9923 / NRRL Y-1056) (Yeast) protein is Mediator of RNA polymerase II transcription subunit 22 (SRB6).